The following is a 354-amino-acid chain: Elongation factor Ts (354 aa).

The segment at Thr-81 to Val-84 is involved in Mg(2+) ion dislocation from EF-Tu.

The protein belongs to the EF-Ts family.

The protein localises to the cytoplasm. Associates with the EF-Tu.GDP complex and induces the exchange of GDP to GTP. It remains bound to the aminoacyl-tRNA.EF-Tu.GTP complex up to the GTP hydrolysis stage on the ribosome. The chain is Elongation factor Ts from Campylobacter concisus (strain 13826).